The chain runs to 204 residues: Peptide deformylase (204 aa).

2 residues coordinate Fe cation: cysteine 131 and histidine 174. The active site involves glutamate 175. A Fe cation-binding site is contributed by histidine 178.

It belongs to the polypeptide deformylase family. The cofactor is Fe(2+).

The catalysed reaction is N-terminal N-formyl-L-methionyl-[peptide] + H2O = N-terminal L-methionyl-[peptide] + formate. Functionally, removes the formyl group from the N-terminal Met of newly synthesized proteins. Requires at least a dipeptide for an efficient rate of reaction. N-terminal L-methionine is a prerequisite for activity but the enzyme has broad specificity at other positions. The chain is Peptide deformylase from Streptococcus mutans serotype c (strain ATCC 700610 / UA159).